The chain runs to 453 residues: Bifunctional protein GlmU (453 aa).

The pyrophosphorylase stretch occupies residues 1-226 (MAFSVVILAA…EIEVEGINNR (226 aa)). UDP-N-acetyl-alpha-D-glucosamine-binding positions include 8-11 (LAAG), Lys22, Gln73, and 78-79 (GT). A Mg(2+)-binding site is contributed by Asp102. Positions 137, 151, 166, and 224 each coordinate UDP-N-acetyl-alpha-D-glucosamine. Residue Asn224 participates in Mg(2+) binding. The segment at 227 to 247 (KQLAAIERAFQFEQAQELMMQ) is linker. Positions 248–453 (GVSLLDPHRF…SGWQRPTKPE (206 aa)) are N-acetyltransferase. UDP-N-acetyl-alpha-D-glucosamine is bound by residues Arg330 and Lys348. His360 acts as the Proton acceptor in catalysis. UDP-N-acetyl-alpha-D-glucosamine contacts are provided by Tyr363 and Asn374. Residues Ala377, 383-384 (NY), Ser402, Ala420, and Arg437 contribute to the acetyl-CoA site.

In the N-terminal section; belongs to the N-acetylglucosamine-1-phosphate uridyltransferase family. This sequence in the C-terminal section; belongs to the transferase hexapeptide repeat family. Homotrimer. It depends on Mg(2+) as a cofactor.

It is found in the cytoplasm. It carries out the reaction alpha-D-glucosamine 1-phosphate + acetyl-CoA = N-acetyl-alpha-D-glucosamine 1-phosphate + CoA + H(+). The enzyme catalyses N-acetyl-alpha-D-glucosamine 1-phosphate + UTP + H(+) = UDP-N-acetyl-alpha-D-glucosamine + diphosphate. Its pathway is nucleotide-sugar biosynthesis; UDP-N-acetyl-alpha-D-glucosamine biosynthesis; N-acetyl-alpha-D-glucosamine 1-phosphate from alpha-D-glucosamine 6-phosphate (route II): step 2/2. It functions in the pathway nucleotide-sugar biosynthesis; UDP-N-acetyl-alpha-D-glucosamine biosynthesis; UDP-N-acetyl-alpha-D-glucosamine from N-acetyl-alpha-D-glucosamine 1-phosphate: step 1/1. It participates in bacterial outer membrane biogenesis; LPS lipid A biosynthesis. In terms of biological role, catalyzes the last two sequential reactions in the de novo biosynthetic pathway for UDP-N-acetylglucosamine (UDP-GlcNAc). The C-terminal domain catalyzes the transfer of acetyl group from acetyl coenzyme A to glucosamine-1-phosphate (GlcN-1-P) to produce N-acetylglucosamine-1-phosphate (GlcNAc-1-P), which is converted into UDP-GlcNAc by the transfer of uridine 5-monophosphate (from uridine 5-triphosphate), a reaction catalyzed by the N-terminal domain. The polypeptide is Bifunctional protein GlmU (Pseudoalteromonas atlantica (strain T6c / ATCC BAA-1087)).